We begin with the raw amino-acid sequence, 259 residues long: Short-chain dehydrogenase reductase 5 (259 aa).

12 to 36 lines the NAD(+) pocket; the sequence is IITGGASGIGAEAARLFTDHGAKVV. Substrate is bound at residue Ser144. Residue Tyr157 is the Proton acceptor of the active site.

This sequence belongs to the short-chain dehydrogenases/reductases (SDR) family.

In Arabidopsis thaliana (Mouse-ear cress), this protein is Short-chain dehydrogenase reductase 5 (SDR5).